A 184-amino-acid polypeptide reads, in one-letter code: Dual specificity protein phosphatase 22 (184 aa).

Gly2 carries N-myristoyl glycine lipidation. A Tyrosine-protein phosphatase domain is found at 4-144 (GMNKILPGLY…LQEFEKHEVH (141 aa)). The residue at position 58 (Ser58) is a Phosphoserine. Catalysis depends on Cys88, which acts as the Phosphocysteine intermediate. Leu89, Ala90, Val92, Ser93, and Arg94 together coordinate a protein.

This sequence belongs to the protein-tyrosine phosphatase family. Non-receptor class dual specificity subfamily. As to quaternary structure, monomer. Interacts with LCK; the interaction is direct. Interacts with UBR2; the interaction is direct. Post-translationally, myristoylation regulates subcellular location, and is necessary for activation of JNK. As to expression, ubiquitous. Highest expression seen in heart, placenta, lung, liver, kidney and pancreas.

The protein resides in the cytoplasm. It carries out the reaction O-phospho-L-tyrosyl-[protein] + H2O = L-tyrosyl-[protein] + phosphate. The enzyme catalyses O-phospho-L-seryl-[protein] + H2O = L-seryl-[protein] + phosphate. The catalysed reaction is O-phospho-L-threonyl-[protein] + H2O = L-threonyl-[protein] + phosphate. In terms of biological role, dual specificity phosphatase; can dephosphorylate both phosphotyrosine and phosphoserine or phosphothreonine residues. Activates the JNK signaling pathway. Inhibits T-cell receptor signaling and T-cell mediated immune responses, acting, at least in part, by inducing degradation of E3 ubiquitin ligase UBR2. Dephosphorylates and thereby induces 'Lys-48'-linked ubiquitination of UBR2, leading to proteasomal degradation of UBR2. Dephosphorylates and thereby inactivates tyrosine kinase LCK. Inhibits UBR2-mediated 'Lys-63'-linked ubiquitination of LCK. May play a role in B-cell receptor (BCR) signaling and B-cell function. The chain is Dual specificity protein phosphatase 22 (DUSP22) from Homo sapiens (Human).